Here is a 167-residue protein sequence, read N- to C-terminus: NAD(P)H-quinone oxidoreductase subunit I, chloroplastic (167 aa).

4Fe-4S ferredoxin-type domains are found at residues 55-84 and 95-124; these read GRIH…VDWK and LNYS…MTEE. [4Fe-4S] cluster contacts are provided by C64, C67, C70, C74, C104, C107, C110, and C114.

Belongs to the complex I 23 kDa subunit family. As to quaternary structure, NDH is composed of at least 16 different subunits, 5 of which are encoded in the nucleus. The cofactor is [4Fe-4S] cluster.

The protein resides in the plastid. Its subcellular location is the chloroplast thylakoid membrane. The catalysed reaction is a plastoquinone + NADH + (n+1) H(+)(in) = a plastoquinol + NAD(+) + n H(+)(out). It carries out the reaction a plastoquinone + NADPH + (n+1) H(+)(in) = a plastoquinol + NADP(+) + n H(+)(out). Functionally, NDH shuttles electrons from NAD(P)H:plastoquinone, via FMN and iron-sulfur (Fe-S) centers, to quinones in the photosynthetic chain and possibly in a chloroplast respiratory chain. The immediate electron acceptor for the enzyme in this species is believed to be plastoquinone. Couples the redox reaction to proton translocation, and thus conserves the redox energy in a proton gradient. The sequence is that of NAD(P)H-quinone oxidoreductase subunit I, chloroplastic from Arabis hirsuta (Hairy rock-cress).